The sequence spans 755 residues: Serine/threonine-protein kinase GA29083 (755 aa).

Low complexity predominate over residues 18-52 (QASASGSGTPKKTAASSAAAQNSKQLLDQLSQQQK). Residues 18–128 (QASASGSGTP…GSANTNGSAS (111 aa)) form a disordered region. 2 stretches are compositionally biased toward basic and acidic residues: residues 53–66 (AQEE…RDCD) and 74–84 (EPEKDLDELRD). A compositionally biased stretch (polar residues) spans 87 to 99 (GSLTGSGSVGKSN). The span at 100 to 128 (GSLSGASSTTSAPAGTSTPGSANTNGSAS) shows a compositional bias: low complexity. Doublecortin domains lie at 157-243 (HRIK…VDYN) and 314-397 (RIVT…VEDF). The Protein kinase domain maps to 484-742 (YTLSQIIGDG…SEDILDHYWT (259 aa)). ATP-binding positions include 490-498 (IGDGNFAIV) and lysine 513. The Proton acceptor role is filled by aspartate 605.

This sequence belongs to the protein kinase superfamily. CAMK Ser/Thr protein kinase family. CaMK subfamily.

The enzyme catalyses L-seryl-[protein] + ATP = O-phospho-L-seryl-[protein] + ADP + H(+). The catalysed reaction is L-threonyl-[protein] + ATP = O-phospho-L-threonyl-[protein] + ADP + H(+). The protein is Serine/threonine-protein kinase GA29083 of Drosophila pseudoobscura pseudoobscura (Fruit fly).